A 513-amino-acid polypeptide reads, in one-letter code: uncharacterized protein (513 aa).

5 helical membrane passes run 262–282 (FAIFTDNTPFVLTGPITFWQL), 304–324 (YMFLFVALYLPAIYVAVITYH), 341–361 (EPIPFPAIIEALIMEISFEAL), 382–402 (LVIGTAAVEAGIVSAPMVIIV), and 429–449 (MFLASIFGIFGIMLGTIILVL). A disordered region spans residues 489-513 (PGTYSRGNGQKGAKREDPKDEENNI). The segment covering 501–513 (AKREDPKDEENNI) has biased composition (basic and acidic residues).

The protein belongs to the GerABKA family.

It localises to the cell membrane. This is an uncharacterized protein from Bacillus subtilis (strain 168).